We begin with the raw amino-acid sequence, 243 residues long: Exosome complex component Rrp41 (243 aa).

The protein belongs to the RNase PH family. Rrp41 subfamily. As to quaternary structure, component of the archaeal exosome complex. Forms a hexameric ring-like arrangement composed of 3 Rrp41-Rrp42 heterodimers. The hexameric ring associates with a trimer of Rrp4 and/or Csl4 subunits.

It is found in the cytoplasm. Functionally, catalytic component of the exosome, which is a complex involved in RNA degradation. Has 3'-&gt;5' exoribonuclease activity. Can also synthesize heteromeric RNA-tails. The polypeptide is Exosome complex component Rrp41 (Sulfurisphaera tokodaii (strain DSM 16993 / JCM 10545 / NBRC 100140 / 7) (Sulfolobus tokodaii)).